The sequence spans 1168 residues: Protein VARIATION IN COMPOUND TRIGGERED ROOT growth response (1168 aa).

The 162-residue stretch at 10-171 (WVYDVFLSFS…EIANDVLAKL (162 aa)) folds into the TIR domain. The active site involves Glu-85. An NB-ARC domain is found at 187 to 452 (EDHIANMSVL…ACLFNHVKVR (266 aa)). 10 LRR repeats span residues 539–562 (TSKVSEFCVHENAFKGMGNLLFLD), 606–629 (LRNLVKLEMHDSKLEKLWEGAMSF), 631–653 (CLKELDMWASKYLKEIPDLSKAT), 676–699 (LNKLLELNMEYCGELETLPTGFNL), 701–720 (SLDYLNFNECWKLRTFPEFA), 721–744 (TNISNLILAETSIEEYPSNLYFKN), 795–820 (LNNLERLDICYCRNLESLPTGINLES), 839–865 (STNIKYLDLDQTGIEEVPWQIENFFNL), 873–896 (CRELKCVSLNIFKLKHLGEVSFSN), and 1065–1089 (NVPLSQLNYDHVDINIHITSGDWRS).

Belongs to the disease resistance NB-LRR family. Part of a nuclear protein complex made of VICTR, PAD4 and EDS1. Interacts (via TIR domain) with PAD4 and EDS1.

The protein resides in the cytoplasm. It localises to the nucleus. It carries out the reaction NAD(+) + H2O = ADP-D-ribose + nicotinamide + H(+). Functionally, disease resistance protein of the TIR-NB-LRR-type. Part of the RPS6 locus that contains a cluster of several paralogous disease resistance (R) genes. Resistance proteins guard the plant against pathogens that contain an appropriate avirulence protein via an indirect interaction with this avirulence protein. That triggers a defense system including the hypersensitive response, which restricts the pathogen growth. Required for [5-(3,4-dichlorophenyl)furan-2-yl]-piperidine-1-ylmethanethione-(DFPM-) induced root growth arrest due to reduced number of meristem cells in the division zone of the primary root and inhibition of abscisic acid- (ABA-) induced stomatal closing. In Arabidopsis thaliana (Mouse-ear cress), this protein is Protein VARIATION IN COMPOUND TRIGGERED ROOT growth response (VICTR).